Consider the following 372-residue polypeptide: Cuticle collagen dpy-10 (372 aa).

Residues 1 to 45 (MKNNAKEDYRTFSLTTNYSRQMIYRCVTGLQIGFSLFSFIIVCVA) form the signal peptide. Triple-helical region stretches follow at residues 144-173 (GPPGPRGSSGTPGKPGLPGNAGKPGMPGTT), 195-251 (GPPG…KGPT), and 259-324 (GPPG…PGVC). The tract at residues 144-372 (GPPGPRGSSG…RAGYQGYGRK (229 aa)) is disordered. Residues 185–196 (EPPPCRPCPKGP) show a composition bias toward pro residues. The span at 197–208 (PGIKGWPGFPGD) shows a compositional bias: low complexity. Composition is skewed to gly residues over residues 237–246 (GYRGGPGAPG) and 283–292 (GLTGGQGERG). The segment covering 293 to 303 (WPGVSGESGEP) has biased composition (low complexity). Residues 353–363 (GYGGSRGGGDR) show a composition bias toward gly residues.

The protein belongs to the cuticular collagen family. Collagen polypeptide chains are complexed within the cuticle by disulfide bonds and other types of covalent cross-links.

In terms of biological role, nematode cuticles are composed largely of collagen-like proteins. The cuticle functions both as an exoskeleton and as a barrier to protect the worm from its environment. This chain is Cuticle collagen dpy-10 (dpy-10), found in Caenorhabditis elegans.